A 64-amino-acid chain; its full sequence is Large ribosomal subunit protein bL33c (64 aa).

The protein belongs to the bacterial ribosomal protein bL33 family.

Its subcellular location is the plastid. The protein resides in the chloroplast. The protein is Large ribosomal subunit protein bL33c (rpl33) of Mesostigma viride (Green alga).